Here is a 354-residue protein sequence, read N- to C-terminus: Ferrochelatase (354 aa).

Fe cation is bound by residues His-214 and Glu-295.

Belongs to the ferrochelatase family.

The protein localises to the cytoplasm. The enzyme catalyses heme b + 2 H(+) = protoporphyrin IX + Fe(2+). The protein operates within porphyrin-containing compound metabolism; protoheme biosynthesis; protoheme from protoporphyrin-IX: step 1/1. In terms of biological role, catalyzes the ferrous insertion into protoporphyrin IX. This Burkholderia orbicola (strain MC0-3) protein is Ferrochelatase.